Consider the following 180-residue polypeptide: MFKLLSEIGPVVAFFAGFFYGGGIQSATLYMLITSVICITLCYIIDKKVSRLSIISTAVLLVSGIITLISGDSMYIKIKPTILYVIFGIIFLTSGIKKNPFIKYALESIIRLKEESWITLSYRTATFFFFMAIVNEIVWRNFPDETWVKFKVFGVVPITFVFILLQLPLLLKNKLPDSKI.

6 helical membrane passes run 4 to 24 (LLSEIGPVVAFFAGFFYGGGI), 25 to 45 (QSATLYMLITSVICITLCYII), 52 to 72 (LSIISTAVLLVSGIITLISGD), 76 to 96 (IKIKPTILYVIFGIIFLTSGI), 118 to 138 (ITLSYRTATFFFFMAIVNEIV), and 150 to 170 (FKVFGVVPITFVFILLQLPLL).

Belongs to the YciB family.

It localises to the cell inner membrane. Plays a role in cell envelope biogenesis, maintenance of cell envelope integrity and membrane homeostasis. This is Inner membrane-spanning protein YciB from Rickettsia bellii (strain RML369-C).